The following is a 131-amino-acid chain: MVEVEKSDAEWRAQLTDEQYAVCRQGGTEQPFSGAYYHCKEPGTYHCVCCDAPLFSSRAKYDSGSGWPSFWAPISDDHLRILEDRSLGMVREEVRCARCDAHLGHVFPDGPMPTGLRYCINSVCLDLKRSG.

The MsrB domain maps to 8–130 (DAEWRAQLTD…NSVCLDLKRS (123 aa)). The Zn(2+) site is built by Cys47, Cys50, Cys96, and Cys99. Cys119 (nucleophile) is an active-site residue.

This sequence belongs to the MsrB Met sulfoxide reductase family. Zn(2+) serves as cofactor.

The enzyme catalyses L-methionyl-[protein] + [thioredoxin]-disulfide + H2O = L-methionyl-(R)-S-oxide-[protein] + [thioredoxin]-dithiol. The protein is Peptide methionine sulfoxide reductase MsrB of Alkalilimnicola ehrlichii (strain ATCC BAA-1101 / DSM 17681 / MLHE-1).